The sequence spans 329 residues: DNA-directed RNA polymerase subunit alpha (329 aa).

Residues 1–235 are alpha N-terminal domain (alpha-NTD); the sequence is MQGSVTEFLK…EQLEAFVDLR (235 aa). An alpha C-terminal domain (alpha-CTD) region spans residues 249 to 329; that stretch reads FDPILLRPVD…NWPPASIADE (81 aa).

This sequence belongs to the RNA polymerase alpha chain family. As to quaternary structure, homodimer. The RNAP catalytic core consists of 2 alpha, 1 beta, 1 beta' and 1 omega subunit. When a sigma factor is associated with the core the holoenzyme is formed, which can initiate transcription.

It carries out the reaction RNA(n) + a ribonucleoside 5'-triphosphate = RNA(n+1) + diphosphate. Its function is as follows. DNA-dependent RNA polymerase catalyzes the transcription of DNA into RNA using the four ribonucleoside triphosphates as substrates. The polypeptide is DNA-directed RNA polymerase subunit alpha (Yersinia pestis bv. Antiqua (strain Antiqua)).